The chain runs to 284 residues: NH(3)-dependent NAD(+) synthetase (284 aa).

An ATP-binding site is contributed by G51 to S58. D57 serves as a coordination point for Mg(2+). Residue R148 participates in deamido-NAD(+) binding. T168 lines the ATP pocket. E173 contacts Mg(2+). Residues K181 and D188 each coordinate deamido-NAD(+). K197 and T219 together coordinate ATP. Residue H268–K269 participates in deamido-NAD(+) binding.

Belongs to the NAD synthetase family. In terms of assembly, homodimer.

It carries out the reaction deamido-NAD(+) + NH4(+) + ATP = AMP + diphosphate + NAD(+) + H(+). It functions in the pathway cofactor biosynthesis; NAD(+) biosynthesis; NAD(+) from deamido-NAD(+) (ammonia route): step 1/1. Its function is as follows. Catalyzes the ATP-dependent amidation of deamido-NAD to form NAD. Uses ammonia as a nitrogen source. In Burkholderia pseudomallei (strain 1106a), this protein is NH(3)-dependent NAD(+) synthetase.